A 2248-amino-acid chain; its full sequence is Zinc finger protein lin-13 (2248 aa).

Positions 1-189 are disordered; it reads MDEFELFQQL…TYASQYSRPP (189 aa). Polar residues predominate over residues 29–38; sequence QQANNNQSAP. Residues 54–92 show a composition bias toward basic and acidic residues; it reads KQREEEEAQRLADFMQKDMKEPAVKRKRGSEEYKKDPLE. Acidic residues predominate over residues 145–155; that stretch reads ELDENYMEENE. Residues 440–444 carry the Required for interaction with hpl-2 isoform a motif; it reads PLVPV. The C2H2-type 1 zinc finger occupies 503 to 525; the sequence is HTCIKCGKTFGTEFMLKHHAQSH. A disordered region spans residues 603-665; sequence KTKKENRNIT…FTSSKQKKKR (63 aa). Basic and acidic residues predominate over residues 605-620; the sequence is KKENRNITDSNEKEFS. 6 consecutive C2H2-type zinc fingers follow at residues 812–837, 959–982, 1140–1162, 1556–1578, 1601–1623, and 1657–1680; these read VRCI…SDVH, YSCS…TRFH, LMCY…MDDH, FKCQ…MRDH, WLCR…MAIH, and YSCG…SVAH. Polar residues predominate over residues 1859 to 1877; that stretch reads PRSSLQTNGSSMGSVTTNG. Residues 1859 to 1900 form a disordered region; sequence PRSSLQTNGSSMGSVTTNGGRVVRPSPPNSMNVTLRRAPPQQ.

In terms of assembly, interacts (via PLVPV motif) with chromobox protein homolog hpl-2 (via chromo (shadow subtype) domain); the interaction is direct and influences localization of hpl-2 to nuclear foci. In terms of tissue distribution, in the L3 stage, expressed in syncytial hypodermal cell 7, body wall muscles, intestinal cells, distal tip cells and many neurons.

It is found in the nucleus. Involved in repression of vulval fate, possibly by a tumor suppressor protein Rb-mediated mechanism. May act in a common pathway with retinoblastoma-like protein homolog lin-35 and hpl-2 to influence the ER stress response in the intestine. Plays a role in recruiting chromobox protein homolog hpl-2 to specific chromatin sites. The sequence is that of Zinc finger protein lin-13 (lin-13) from Caenorhabditis elegans.